A 127-amino-acid chain; its full sequence is NADPH-dependent 7-cyano-7-deazaguanine reductase (127 aa).

The active-site Thioimide intermediate is the C40. D47 functions as the Proton donor in the catalytic mechanism. Substrate-binding positions include 62–64 (VEL) and 81–82 (HE).

It belongs to the GTP cyclohydrolase I family. QueF type 1 subfamily.

Its subcellular location is the cytoplasm. The enzyme catalyses 7-aminomethyl-7-carbaguanine + 2 NADP(+) = 7-cyano-7-deazaguanine + 2 NADPH + 3 H(+). The protein operates within tRNA modification; tRNA-queuosine biosynthesis. Functionally, catalyzes the NADPH-dependent reduction of 7-cyano-7-deazaguanine (preQ0) to 7-aminomethyl-7-deazaguanine (preQ1). The chain is NADPH-dependent 7-cyano-7-deazaguanine reductase from Campylobacter jejuni subsp. jejuni serotype O:2 (strain ATCC 700819 / NCTC 11168).